Reading from the N-terminus, the 515-residue chain is Probable cytochrome P450 4p3 (515 aa).

Heme contacts are provided by Glu-322 and Cys-461.

The protein belongs to the cytochrome P450 family. Heme serves as cofactor.

It is found in the endoplasmic reticulum membrane. Its subcellular location is the microsome membrane. Functionally, may be involved in the metabolism of insect hormones and in the breakdown of synthetic insecticides. In Drosophila melanogaster (Fruit fly), this protein is Probable cytochrome P450 4p3 (Cyp4p3).